Reading from the N-terminus, the 841-residue chain is Translation initiation factor IF-2 (841 aa).

Composition is skewed to basic and acidic residues over residues 1–12 (MSDNEIKNEAPK), 50–92 (EAAL…EATK), 114–170 (EQPK…REEA), 188–202 (READ…EANR), and 213–235 (KKGD…DVKG). Disordered stretches follow at residues 1–24 (MSDN…KTTV) and 50–246 (EAAL…GSAL). The tr-type G domain occupies 340–510 (TRAPVVTIMG…LLQSEVLELT (171 aa)). A G1 region spans residues 349 to 356 (GHVDHGKT). A GTP-binding site is contributed by 349–356 (GHVDHGKT). The interval 374–378 (GITQH) is G2. The tract at residues 396–399 (DTPG) is G3. GTP contacts are provided by residues 396-400 (DTPGH) and 450-453 (NKID). Residues 450–453 (NKID) are G4. Residues 486-488 (SAK) are G5.

The protein belongs to the TRAFAC class translation factor GTPase superfamily. Classic translation factor GTPase family. IF-2 subfamily.

Its subcellular location is the cytoplasm. Functionally, one of the essential components for the initiation of protein synthesis. Protects formylmethionyl-tRNA from spontaneous hydrolysis and promotes its binding to the 30S ribosomal subunits. Also involved in the hydrolysis of GTP during the formation of the 70S ribosomal complex. This Actinobacillus pleuropneumoniae serotype 3 (strain JL03) protein is Translation initiation factor IF-2.